The following is a 256-amino-acid chain: Protein crossbronx-like (256 aa).

The UBC core domain occupies asparagine 17 to glutamine 179.

Belongs to the ubiquitin-conjugating enzyme family. FTS subfamily.

This chain is Protein crossbronx-like, found in Drosophila virilis (Fruit fly).